A 788-amino-acid chain; its full sequence is Xylulose-5-phosphate phosphoketolase (788 aa).

The protein belongs to the XFP family. In terms of assembly, homohexamer. The cofactor is thiamine diphosphate.

It carries out the reaction D-xylulose 5-phosphate + phosphate = acetyl phosphate + D-glyceraldehyde 3-phosphate + H2O. The polypeptide is Xylulose-5-phosphate phosphoketolase (xpkA) (Lactiplantibacillus pentosus (Lactobacillus pentosus)).